Reading from the N-terminus, the 1004-residue chain is Protein phosphatase 1 regulatory subunit 12A (1004 aa).

The interval 35–38 (KVKF) is important for interaction with PPP1CB. 6 ANK repeats span residues 39 to 68 (DDGAVFLAACSSGDTEEVLRLLERGADINY), 72 to 101 (DGLTALHQACIDDNVDMVKFLVENGANINQ), 105 to 134 (EGWIPLHAAASCGYLDIAEYLISQGAHVGA), 138 to 164 (EGDTPLDIAEEEAMEELLQNEVNRQGV), 198 to 227 (SGGTALHVAAAKGYTEVLKLLIQARYDVNI), and 231 to 260 (DGWTPLHAAAHWGKEEACRILVENLCDMEA). Positions 291–300 (HSEKREKKSP) are enriched in basic and acidic residues. Positions 291 to 920 (HSEKREKKSP…SYLEDRKPYC (630 aa)) are disordered. The span at 302–316 (IESTANLDNNQTQKT) shows a compositional bias: polar residues. 2 stretches are compositionally biased toward basic and acidic residues: residues 318–329 (KNKETLIMEQEK) and 336–353 (SLEHEKADEEEEGKKDES). Acidic residues predominate over residues 357 to 369 (SEEEEDDDSESEA). Over residues 378-392 (ANANTTSTQSASMTA) the composition is skewed to polar residues. Over residues 417 to 427 (SPKEEERKDES) the composition is skewed to basic and acidic residues. Low complexity predominate over residues 464 to 475 (RSASSPRLSSSL). Over residues 476 to 486 (DNKEKEKDGKG) the composition is skewed to basic and acidic residues. Over residues 514–525 (SSASSIRSGSSY) the composition is skewed to low complexity. Over residues 528-538 (RKWEEDVKKNS) the composition is skewed to basic and acidic residues. Residues 539–554 (LNEGPTSLNTSYQRSG) are compositionally biased toward polar residues. 2 stretches are compositionally biased toward low complexity: residues 564–578 (VSSNVPSTASTVTSS) and 587–602 (ASANTTTKSTTGSTSA). The segment covering 613 to 624 (WAEDSTEKEKDS) has biased composition (basic and acidic residues). Positions 625 to 659 (VPTAVTVPVAPSVVNAAATTTAMTTATSGTVSSTS) are enriched in low complexity. Positions 672-681 (VRDEESESQR) are enriched in basic and acidic residues. The segment covering 682 to 692 (KARSRQARQSR) has biased composition (basic residues). The residue at position 695 (Thr695) is a Phosphothreonine; by ROCK2. A compositionally biased stretch (basic and acidic residues) spans 717-765 (RTREQENEEKEKEEKEKQDKEKQEEKKESETKDDDYRQRYSRTVEEPYH). Residues 770 to 793 (TSTSTSTSSTSSLSTSTSSLSSSS) are compositionally biased toward low complexity. The segment covering 794–808 (QLNRPNSLIGITSAY) has biased composition (polar residues). The span at 812–837 (GTKESEREGGKKEEEKEEDKSQPKSI) shows a compositional bias: basic and acidic residues. Residues 838 to 849 (RERRRPREKRRS) are compositionally biased toward basic residues. A Phosphothreonine; by ROCK2 modification is found at Thr850. Over residues 864 to 880 (QEHQSDSEEGTNKKETQ) the composition is skewed to basic and acidic residues. Residues 881–896 (SDSLSRYDTGSLSVSS) are compositionally biased toward polar residues.

In terms of assembly, PP1 comprises a catalytic subunit, PPP1CA, PPP1CB or PPP1CC, and one or several targeting or regulatory subunits. PPP1R12A mediates binding to myosin. Phosphorylated by CIT (Rho-associated kinase) and by ROCK2 on serine and threonine residues. Phosphorylation at Thr-695 leads to inhibition of myosin phosphatase activity. Phosphorylation at Thr-850 abolishes myosin binding. May be phosphorylated at Thr-695 by DMPK; may inhibit the myosin phosphatase activity. As to expression, detected in brain, lung, aorta, heart, gizzard, stomach, oviduct, spleen, kidney and small intestine.

The protein resides in the cytoplasm. The protein localises to the cytoskeleton. It is found in the stress fiber. Functionally, regulates myosin phosphatase activity. This chain is Protein phosphatase 1 regulatory subunit 12A (PPP1R12A), found in Gallus gallus (Chicken).